The chain runs to 244 residues: Probable transcriptional regulatory protein CHAB381_1426 (244 aa).

The protein belongs to the TACO1 family.

The protein localises to the cytoplasm. This is Probable transcriptional regulatory protein CHAB381_1426 from Campylobacter hominis (strain ATCC BAA-381 / DSM 21671 / CCUG 45161 / LMG 19568 / NCTC 13146 / CH001A).